Consider the following 305-residue polypeptide: UDP-3-O-acyl-N-acetylglucosamine deacetylase (305 aa).

Histidine 79, histidine 238, and aspartate 242 together coordinate Zn(2+). Histidine 265 serves as the catalytic Proton donor.

This sequence belongs to the LpxC family. Zn(2+) is required as a cofactor.

The enzyme catalyses a UDP-3-O-[(3R)-3-hydroxyacyl]-N-acetyl-alpha-D-glucosamine + H2O = a UDP-3-O-[(3R)-3-hydroxyacyl]-alpha-D-glucosamine + acetate. It participates in glycolipid biosynthesis; lipid IV(A) biosynthesis; lipid IV(A) from (3R)-3-hydroxytetradecanoyl-[acyl-carrier-protein] and UDP-N-acetyl-alpha-D-glucosamine: step 2/6. Its function is as follows. Catalyzes the hydrolysis of UDP-3-O-myristoyl-N-acetylglucosamine to form UDP-3-O-myristoylglucosamine and acetate, the committed step in lipid A biosynthesis. This is UDP-3-O-acyl-N-acetylglucosamine deacetylase from Cronobacter sakazakii (strain ATCC BAA-894) (Enterobacter sakazakii).